A 147-amino-acid polypeptide reads, in one-letter code: Small ribosomal subunit protein uS12 (147 aa).

Belongs to the universal ribosomal protein uS12 family. In terms of assembly, part of the 30S ribosomal subunit.

In terms of biological role, with S4 and S5 plays an important role in translational accuracy. Located at the interface of the 30S and 50S subunits. In Methanococcus maripaludis (strain C7 / ATCC BAA-1331), this protein is Small ribosomal subunit protein uS12.